Here is a 405-residue protein sequence, read N- to C-terminus: Indoleamine 2,3-dioxygenase acdA (405 aa).

Histidine 312 lines the heme pocket.

This sequence belongs to the indoleamine 2,3-dioxygenase family. It depends on heme as a cofactor.

The catalysed reaction is L-tryptophan + O2 = N-formyl-L-kynurenine. The protein operates within secondary metabolite biosynthesis. In terms of biological role, indoleamine 2,3-dioxygenase; part of the gene cluster that mediates the biosynthesis of aspcandine, a pyrrolobenzazepine alkaloid. Initially, the indoleamine 2,3-dioxygenase acdA accepts L-tryptophan and performs the oxidative opening of the indole ring to yield N'-formyl-L-kynurenine, which undergoes the spontaneous deformylation reaction to provide L-kynurenine. The kynurenine 3-monooxygenase acdD then hydroxylates L-kynurenine to afford 3-hydroxy-L-kynurenine. 3-hydroxy-L-kynurenine is activated by the A domain of the NRPS-PKS acdB and subsequently loaded onto the enzyme. The KS domain conducts the decarboxylative condensation of the 3-hydroxy-L-kynurenyl and malonyl moieties, and subsequent nucleophilic attacks by the two amino groups would occur nonenzymatically at two distinct positions, achieving the chain release and the construction of the tricyclic system. Finally, a dehydration reaction completes the biosynthesis to yield aspcandine. The polypeptide is Indoleamine 2,3-dioxygenase acdA (Aspergillus candidus).